A 570-amino-acid chain; its full sequence is Pleckstrin homology domain-containing family D member 1 (570 aa).

A compositionally biased stretch (basic and acidic residues) spans 1–13 (MTTKTTPKELKAK). The disordered stretch occupies residues 1–42 (MTTKTTPKELKAKKESKKKGSAPEPPKNGPPRTSPPNTIEKK). Positions 23 to 34 (PEPPKNGPPRTS) are enriched in pro residues. The region spanning 83–192 (GVQNYGILMK…WLKALRSATK (110 aa)) is the PH domain. Positions 202–448 (ETMIRELENR…TGAQMTELQE (247 aa)) form a coiled coil. Positions 542 to 551 (SKRGIRSSFR) are enriched in basic residues. Positions 542–570 (SKRGIRSSFRKKTDSITTQPREKEPLMQL) are disordered. Positions 561-570 (PREKEPLMQL) are enriched in basic and acidic residues.

Belongs to the PLEKHD1 family.

In Caenorhabditis elegans, this protein is Pleckstrin homology domain-containing family D member 1.